A 226-amino-acid chain; its full sequence is MRKTKIVVPIMLTELAELEKVSVSDYRTADIVEWRADFLSADEILEMAPKFFEKFKESKILFTLRTVREGGNIQVSEKKYLQILKEILTYNPAYIDVEFFTHGPSFAALKDFRDKMVLSYHNFDEVPSDLTNRLIKMHEEGTAFVKVAVMPERECDVLDLLQITRDMTLEYGDHFISMAMGDLGRLSRISGYLTGSCWTFASLENSSAPGQISLKETEYILDILEK.

3-dehydroquinate is bound by residues 33 to 35 (EWR) and arginine 65. Histidine 121 acts as the Proton donor/acceptor in catalysis. The Schiff-base intermediate with substrate role is filled by lysine 146. Residues arginine 188, serine 207, and glutamine 211 each coordinate 3-dehydroquinate.

The protein belongs to the type-I 3-dehydroquinase family. In terms of assembly, homodimer.

The enzyme catalyses 3-dehydroquinate = 3-dehydroshikimate + H2O. It functions in the pathway metabolic intermediate biosynthesis; chorismate biosynthesis; chorismate from D-erythrose 4-phosphate and phosphoenolpyruvate: step 3/7. In terms of biological role, involved in the third step of the chorismate pathway, which leads to the biosynthesis of aromatic amino acids. Catalyzes the cis-dehydration of 3-dehydroquinate (DHQ) and introduces the first double bond of the aromatic ring to yield 3-dehydroshikimate. The protein is 3-dehydroquinate dehydratase of Lactococcus lactis subsp. lactis (strain IL1403) (Streptococcus lactis).